Reading from the N-terminus, the 114-residue chain is T cell receptor beta variable 6-4 (114 aa).

Residues M1–A21 form the signal peptide. One can recognise an Ig-like domain in the interval G22–D114. C42 and C110 form a disulfide bridge.

Alpha-beta TR is a heterodimer composed of an alpha and beta chain; disulfide-linked. The alpha-beta TR is associated with the transmembrane signaling CD3 coreceptor proteins to form the TR-CD3 (TcR or TCR). The assembly of alpha-beta TR heterodimers with CD3 occurs in the endoplasmic reticulum where a single alpha-beta TR heterodimer associates with one CD3D-CD3E heterodimer, one CD3G-CD3E heterodimer and one CD247 homodimer forming a stable octameric structure. CD3D-CD3E and CD3G-CD3E heterodimers preferentially associate with TR alpha and TR beta chains, respectively. The association of the CD247 homodimer is the last step of TcR assembly in the endoplasmic reticulum and is required for transport to the cell surface.

The protein localises to the cell membrane. Its function is as follows. V region of the variable domain of T cell receptor (TR) beta chain that participates in the antigen recognition. Alpha-beta T cell receptors are antigen specific receptors which are essential to the immune response and are present on the cell surface of T lymphocytes. Recognize peptide-major histocompatibility (MH) (pMH) complexes that are displayed by antigen presenting cells (APC), a prerequisite for efficient T cell adaptive immunity against pathogens. Binding of alpha-beta TR to pMH complex initiates TR-CD3 clustering on the cell surface and intracellular activation of LCK that phosphorylates the ITAM motifs of CD3G, CD3D, CD3E and CD247 enabling the recruitment of ZAP70. In turn ZAP70 phosphorylates LAT, which recruits numerous signaling molecules to form the LAT signalosome. The LAT signalosome propagates signal branching to three major signaling pathways, the calcium, the mitogen-activated protein kinase (MAPK) kinase and the nuclear factor NF-kappa-B (NF-kB) pathways, leading to the mobilization of transcription factors that are critical for gene expression and essential for T cell growth and differentiation. The T cell repertoire is generated in the thymus, by V-(D)-J rearrangement. This repertoire is then shaped by intrathymic selection events to generate a peripheral T cell pool of self-MH restricted, non-autoaggressive T cells. Post-thymic interaction of alpha-beta TR with the pMH complexes shapes TR structural and functional avidity. The protein is T cell receptor beta variable 6-4 of Homo sapiens (Human).